The sequence spans 115 residues: Large ribosomal subunit protein mL60 (115 aa).

The N-terminal 23 residues, 1–23, are a transit peptide targeting the mitochondrion; the sequence is MLGAFNSTLARFGGLVHKVPWRL. Positions 88–115 are disordered; it reads AGLQGFRKGVHKSPKWTRSTNRVNPTGF. Residues 103 to 115 are compositionally biased toward polar residues; it reads WTRSTNRVNPTGF.

Belongs to the mitochondrion-specific ribosomal protein mL60 family. Component of the mitochondrial large ribosomal subunit (mt-LSU). Mature yeast 74S mitochondrial ribosomes consist of a small (37S) and a large (54S) subunit. The 37S small subunit contains a 15S ribosomal RNA (15S mt-rRNA) and at least 32 different proteins. The 54S large subunit contains a 21S rRNA (21S mt-rRNA) and at least 45 different proteins.

It is found in the mitochondrion. In terms of biological role, component of the mitochondrial ribosome (mitoribosome), a dedicated translation machinery responsible for the synthesis of mitochondrial genome-encoded proteins, including at least some of the essential transmembrane subunits of the mitochondrial respiratory chain. The mitoribosomes are attached to the mitochondrial inner membrane and translation products are cotranslationally integrated into the membrane. This Schizosaccharomyces pombe (strain 972 / ATCC 24843) (Fission yeast) protein is Large ribosomal subunit protein mL60 (mrpl31).